We begin with the raw amino-acid sequence, 254 residues long: 3-oxo-5-alpha-steroid 4-dehydrogenase 2 (254 aa).

4 helical membrane-spanning segments follow: residues 8–28, 72–92, 146–166, and 206–226; these read SPVL…LYVA, PLSL…VHYF, FCLG…SDYI, and LATW…FLGL.

Belongs to the steroid 5-alpha reductase family.

The protein resides in the microsome membrane. Its subcellular location is the endoplasmic reticulum membrane. It carries out the reaction a 3-oxo-5alpha-steroid + NADP(+) = a 3-oxo-Delta(4)-steroid + NADPH + H(+). The catalysed reaction is 17beta-hydroxy-5alpha-androstan-3-one + NADP(+) = testosterone + NADPH + H(+). It catalyses the reaction 5alpha-pregnane-3,20-dione + NADP(+) = progesterone + NADPH + H(+). Converts testosterone (T) into 5-alpha-dihydrotestosterone (DHT) and progesterone or corticosterone into their corresponding 5-alpha-3-oxosteroids. It plays a central role in sexual differentiation and androgen physiology. The sequence is that of 3-oxo-5-alpha-steroid 4-dehydrogenase 2 (SRD5A2) from Macaca fascicularis (Crab-eating macaque).